Here is a 172-residue protein sequence, read N- to C-terminus: Large ribosomal subunit protein uL10 (172 aa).

Belongs to the universal ribosomal protein uL10 family. As to quaternary structure, part of the ribosomal stalk of the 50S ribosomal subunit. The N-terminus interacts with L11 and the large rRNA to form the base of the stalk. The C-terminus forms an elongated spine to which L12 dimers bind in a sequential fashion forming a multimeric L10(L12)X complex.

Its function is as follows. Forms part of the ribosomal stalk, playing a central role in the interaction of the ribosome with GTP-bound translation factors. The protein is Large ribosomal subunit protein uL10 of Brucella abortus (strain S19).